A 321-amino-acid polypeptide reads, in one-letter code: Lipoyl synthase (321 aa).

Cys-68, Cys-73, Cys-79, Cys-94, Cys-98, Cys-101, and Ser-308 together coordinate [4Fe-4S] cluster. Positions 80–297 (FNHGTATFMI…KEEAMAMGFT (218 aa)) constitute a Radical SAM core domain.

This sequence belongs to the radical SAM superfamily. Lipoyl synthase family. Requires [4Fe-4S] cluster as cofactor.

It is found in the cytoplasm. It carries out the reaction [[Fe-S] cluster scaffold protein carrying a second [4Fe-4S](2+) cluster] + N(6)-octanoyl-L-lysyl-[protein] + 2 oxidized [2Fe-2S]-[ferredoxin] + 2 S-adenosyl-L-methionine + 4 H(+) = [[Fe-S] cluster scaffold protein] + N(6)-[(R)-dihydrolipoyl]-L-lysyl-[protein] + 4 Fe(3+) + 2 hydrogen sulfide + 2 5'-deoxyadenosine + 2 L-methionine + 2 reduced [2Fe-2S]-[ferredoxin]. The protein operates within protein modification; protein lipoylation via endogenous pathway; protein N(6)-(lipoyl)lysine from octanoyl-[acyl-carrier-protein]: step 2/2. Its function is as follows. Catalyzes the radical-mediated insertion of two sulfur atoms into the C-6 and C-8 positions of the octanoyl moiety bound to the lipoyl domains of lipoate-dependent enzymes, thereby converting the octanoylated domains into lipoylated derivatives. In Serratia proteamaculans (strain 568), this protein is Lipoyl synthase.